A 289-amino-acid chain; its full sequence is Carbonyl reductase [NADPH] 1 (289 aa).

An N-acetylserine modification is found at serine 2. Serine 2 is modified (phosphoserine). NADP(+)-binding positions include valine 10–valine 34, aspartate 63–isoleucine 64, and asparagine 90. Residues phenylalanine 95–leucine 97 and glutamine 106 each bind glutathione. Serine 140 lines the substrate pocket. Threonine 193–tyrosine 194 provides a ligand contact to glutathione. Catalysis depends on tyrosine 194, which acts as the Proton acceptor. NADP(+)-binding positions include tyrosine 194–lysine 198 and valine 231–threonine 233. Lysine 239 carries the post-translational modification N6-1-carboxyethyl lysine.

It belongs to the short-chain dehydrogenases/reductases (SDR) family. In terms of assembly, monomer. Expressed in kidney (at protein level).

It is found in the cytoplasm. The enzyme catalyses a secondary alcohol + NADP(+) = a ketone + NADPH + H(+). It catalyses the reaction prostaglandin E1 + NADP(+) = 15-oxoprostaglandin E1 + NADPH + H(+). The catalysed reaction is prostaglandin F2alpha + NADP(+) = prostaglandin E2 + NADPH + H(+). It carries out the reaction prostaglandin D2 + NADP(+) = 15-oxoprostaglandin D2 + NADPH + H(+). The enzyme catalyses prostaglandin E2 + NADP(+) = 15-oxoprostaglandin E2 + NADPH + H(+). It catalyses the reaction prostaglandin F2alpha + NADP(+) = 15-oxoprostaglandin F2alpha + NADPH + H(+). The catalysed reaction is menadione + NADPH + H(+) = menadiol + NADP(+). It carries out the reaction daunorubicin + NADPH + H(+) = 13-dihydrodaunorubicin + NADP(+). The enzyme catalyses S-nitrosoglutathione + NADPH + H(+) = S-(hydroxysulfenamide)glutathione + NADP(+). It catalyses the reaction a primary alcohol + NADP(+) = an aldehyde + NADPH + H(+). The catalysed reaction is cortisol + NADPH + H(+) = 20beta-dihydrocortisol + NADP(+). It carries out the reaction corticosterone + NADPH + H(+) = 20beta-dihydrocorticosterone + NADP(+). Its function is as follows. NADPH-dependent reductase with broad substrate specificity. Catalyzes the reduction of a wide variety of carbonyl compounds including quinones, prostaglandins, menadione, plus various xenobiotics. Catalyzes the reduction of the antitumor anthracyclines doxorubicin and daunorubicin to the cardiotoxic compounds doxorubicinol and daunorubicinol. Can convert prostaglandin E2 to prostaglandin F2-alpha. Can bind glutathione, which explains its higher affinity for glutathione-conjugated substrates. Catalyzes the reduction of S-nitrosoglutathione. In addition, participates in the glucocorticoid metabolism by catalyzing the NADPH-dependent cortisol/corticosterone into 20beta-dihydrocortisol (20b-DHF) or 20beta-corticosterone (20b-DHB), which are weak agonists of NR3C1 and NR3C2 in adipose tissue. This chain is Carbonyl reductase [NADPH] 1, found in Sus scrofa (Pig).